The primary structure comprises 129 residues: Small ribosomal subunit protein uS8 (129 aa).

The protein belongs to the universal ribosomal protein uS8 family. In terms of assembly, part of the 30S ribosomal subunit.

One of the primary rRNA binding proteins, it binds directly to 16S rRNA central domain where it helps coordinate assembly of the platform of the 30S subunit. The chain is Small ribosomal subunit protein uS8 from Thermoplasma acidophilum (strain ATCC 25905 / DSM 1728 / JCM 9062 / NBRC 15155 / AMRC-C165).